Here is a 91-residue protein sequence, read N- to C-terminus: MARVTVEDAVNVVGNRFDLILMASRRARQLATQGKTPLVDPENDKPTVIALREIEENLITNELMDIQDRQEKHEKQTAELAAVAAIAEGRG.

Belongs to the RNA polymerase subunit omega family. In terms of assembly, the RNAP catalytic core consists of 2 alpha, 1 beta, 1 beta' and 1 omega subunit. When a sigma factor is associated with the core the holoenzyme is formed, which can initiate transcription.

It carries out the reaction RNA(n) + a ribonucleoside 5'-triphosphate = RNA(n+1) + diphosphate. Its function is as follows. Promotes RNA polymerase assembly. Latches the N- and C-terminal regions of the beta' subunit thereby facilitating its interaction with the beta and alpha subunits. The chain is DNA-directed RNA polymerase subunit omega from Psychromonas ingrahamii (strain DSM 17664 / CCUG 51855 / 37).